The chain runs to 340 residues: MHISTIPVSDIAKPNAPAAGAWQADDVLALYELPFMDLLYRAQQVHRQHFDASAIQLSSLLSIKTGGCPEDCAYCPQSAHYDTGLAADKLMPLEDVLQAARAAQAGGAQRFCMGAAWRSPKPHHLDEVAEMIRAVKALGLETCVTLGMLRDGQAEQLKEAGLDYYNHNLDTSPEFYGSIISTRTYQDRLDTLARVRDAGLNVCCGGIVGMGESRRERAGLIAQLASLDPYPESVPINNLVQVEGTPLAGTEALDPFEFVRTIAVARIVMPLARVRLSAGRETMSDTLQALCFLAGANSLFCGDVLLTTGNPQVEADQRLLERLGMHAEGALPALPQATPA.

Residues 53–280 (SAIQLSSLLS…LARVRLSAGR (228 aa)) enclose the Radical SAM core domain. [4Fe-4S] cluster contacts are provided by C68, C72, and C75. C112, C143, C203, and R275 together coordinate [2Fe-2S] cluster.

Belongs to the radical SAM superfamily. Biotin synthase family. As to quaternary structure, homodimer. [4Fe-4S] cluster serves as cofactor. It depends on [2Fe-2S] cluster as a cofactor.

The catalysed reaction is (4R,5S)-dethiobiotin + (sulfur carrier)-SH + 2 reduced [2Fe-2S]-[ferredoxin] + 2 S-adenosyl-L-methionine = (sulfur carrier)-H + biotin + 2 5'-deoxyadenosine + 2 L-methionine + 2 oxidized [2Fe-2S]-[ferredoxin]. The protein operates within cofactor biosynthesis; biotin biosynthesis; biotin from 7,8-diaminononanoate: step 2/2. In terms of biological role, catalyzes the conversion of dethiobiotin (DTB) to biotin by the insertion of a sulfur atom into dethiobiotin via a radical-based mechanism. The protein is Biotin synthase of Bordetella petrii (strain ATCC BAA-461 / DSM 12804 / CCUG 43448).